A 208-amino-acid chain; its full sequence is Uracil phosphoribosyltransferase (208 aa).

Residues Arg78, Arg103, and 130–138 (DPMLATGGT) contribute to the 5-phospho-alpha-D-ribose 1-diphosphate site. Uracil contacts are provided by residues Ile193 and 198 to 200 (GDA). Asp199 is a binding site for 5-phospho-alpha-D-ribose 1-diphosphate.

This sequence belongs to the UPRTase family. Requires Mg(2+) as cofactor.

The catalysed reaction is UMP + diphosphate = 5-phospho-alpha-D-ribose 1-diphosphate + uracil. It functions in the pathway pyrimidine metabolism; UMP biosynthesis via salvage pathway; UMP from uracil: step 1/1. Its activity is regulated as follows. Allosterically activated by GTP. Functionally, catalyzes the conversion of uracil and 5-phospho-alpha-D-ribose 1-diphosphate (PRPP) to UMP and diphosphate. In Oleidesulfovibrio alaskensis (strain ATCC BAA-1058 / DSM 17464 / G20) (Desulfovibrio alaskensis), this protein is Uracil phosphoribosyltransferase.